The chain runs to 149 residues: Cytochrome c-type biogenesis protein CcmE (149 aa).

The Cytoplasmic portion of the chain corresponds to 1 to 7 (MKKRHQR). Residues 8-28 (LFLVLGVVAGVSVATALVLNA) traverse the membrane as a helical; Signal-anchor for type II membrane protein segment. The Periplasmic segment spans residues 29 to 149 (FRDNMTFFIT…EHSVDEVGDY (121 aa)). The heme site is built by His-123 and Tyr-127.

This sequence belongs to the CcmE/CycJ family.

It is found in the cell inner membrane. In terms of biological role, heme chaperone required for the biogenesis of c-type cytochromes. Transiently binds heme delivered by CcmC and transfers the heme to apo-cytochromes in a process facilitated by CcmF and CcmH. This chain is Cytochrome c-type biogenesis protein CcmE, found in Halorhodospira halophila (strain DSM 244 / SL1) (Ectothiorhodospira halophila (strain DSM 244 / SL1)).